Here is a 252-residue protein sequence, read N- to C-terminus: Major prion protein (252 aa).

An N-terminal signal peptide occupies residues 1–28 (MAHLGYWMLLLFVATWSDVGLCKKRPKP). Residues 23 to 229 (KKRPKPGGGW…ESQAAYQRAA (207 aa)) are interaction with GRB2, ERI3 and SYN1. A disordered region spans residues 26 to 109 (PKPGGGWNTG…KPSKPKTSMK (84 aa)). 5 repeat units span residues 51–59 (PPQGGGWGQ), 60–67 (PHGGGWGQ), 68–75 (PHGGGWGQ), 76–83 (PHGGGWGQ), and 84–92 (PHGGGWGQG). The segment at 51–92 (PPQGGGWGQPHGGGWGQPHGGGWGQPHGGGWGQPHGGGWGQG) is 5 X 8 AA tandem repeats of P-H-G-G-G-W-G-Q. Positions 53–93 (QGGGWGQPHGGGWGQPHGGGWGQPHGGGWGQPHGGGWGQGG) are enriched in gly residues. 12 residues coordinate Cu(2+): histidine 61, glycine 62, glycine 63, histidine 69, glycine 70, glycine 71, histidine 77, glycine 78, glycine 79, histidine 85, glycine 86, and glycine 87. A disulfide bond links cysteine 178 and cysteine 213. N-linked (GlcNAc...) asparagine glycans are attached at residues asparagine 180 and asparagine 196. Residue alanine 229 is the site of GPI-anchor amidated alanine attachment. A propeptide spans 230–252 (GVLLFSSPPVILLISFLIFLIVG) (removed in mature form).

It belongs to the prion family. Monomer and homodimer. Has a tendency to aggregate into amyloid fibrils containing a cross-beta spine, formed by a steric zipper of superposed beta-strands. Soluble oligomers may represent an intermediate stage on the path to fibril formation. Copper binding may promote oligomerization. Interacts with GRB2, APP, ERI3/PRNPIP and SYN1. Mislocalized cytosolically exposed PrP interacts with MGRN1; this interaction alters MGRN1 subcellular location and causes lysosomal enlargement. Interacts with KIAA1191.

Its subcellular location is the cell membrane. It is found in the golgi apparatus. In terms of biological role, its primary physiological function is unclear. Has cytoprotective activity against internal or environmental stresses. May play a role in neuronal development and synaptic plasticity. May be required for neuronal myelin sheath maintenance. May play a role in iron uptake and iron homeostasis. Soluble oligomers are toxic to cultured neuroblastoma cells and induce apoptosis (in vitro). Association with GPC1 (via its heparan sulfate chains) targets PRNP to lipid rafts. Also provides Cu(2+) or Zn(2+) for the ascorbate-mediated GPC1 deaminase degradation of its heparan sulfate side chains. The sequence is that of Major prion protein (PRNP) from Oryctolagus cuniculus (Rabbit).